Reading from the N-terminus, the 317-residue chain is Putative 2-hydroxyacid dehydrogenase SAB2178 (317 aa).

Residues 155 to 156 (EI), 234 to 236 (ASR), and Asp-260 each bind NAD(+). The active site involves Arg-236. Glu-265 is a catalytic residue. Catalysis depends on His-283, which acts as the Proton donor. 283-286 (HIGN) is a binding site for NAD(+).

Belongs to the D-isomer specific 2-hydroxyacid dehydrogenase family.

The protein is Putative 2-hydroxyacid dehydrogenase SAB2178 of Staphylococcus aureus (strain bovine RF122 / ET3-1).